We begin with the raw amino-acid sequence, 773 residues long: Probable C-mannosyltransferase DPY19L2 (773 aa).

The interval 1 to 45 is disordered; sequence MVGPTRSKLREGSSDRPQSSCTGQARRRWSAATMEPQQERSAPQE. Residues 1–122 lie on the Nuclear side of the membrane; sequence MVGPTRSKLR…ALQMHRFSHR (122 aa). A helical membrane pass occupies residues 123-143; it reads TLFGLAIFVGILHWLHLITLF. Over 144 to 209 the chain is Perinuclear space; it reads ENDHHFSHLS…INTVKRFHLY (66 aa). A helical membrane pass occupies residues 210 to 230; that stretch reads PEVVIAYWYRTIIGIMNLFGI. The Nuclear segment spans residues 231-256; that stretch reads ETKTCWNVTRMEPLNEVQSCEGLGDP. A helical membrane pass occupies residues 257–277; the sequence is ACFYIGVIFILNGLMMGLFFI. The Perinuclear space segment spans residues 278 to 311; the sequence is YSTYLSGSQLGGLITVACYFFNHGEATRVMWTPP. The chain crosses the membrane as a helical span at residues 312-332; sequence LRESFSYPFLVLQMYILTIIL. Residues 333-358 lie on the Nuclear side of the membrane; sequence RTSTVHKKHYMALCFSNVAFMLPWQF. The helical transmembrane segment at 359–379 threads the bilayer; sequence AQFILFTQIASLFPMYVVGYI. Residues 380–386 lie on the Perinuclear space side of the membrane; the sequence is EPSKFQK. A helical membrane pass occupies residues 387–407; that stretch reads IIYVNMSSVALCFILMFGNSM. Residues 408–437 lie on the Nuclear side of the membrane; that stretch reads YLSSYYSSCLLVTWAIMQKKSKIQKLGGTE. The helical transmembrane segment at 438–458 threads the bilayer; it reads LQFWLIQGCFWWCGTIILKFL. The Perinuclear space segment spans residues 459–507; it reads TSKICGVSDHIRLSDLIAARILRYTDFDTLIYTCAPEFDFMEQATPLRY. A helical membrane pass occupies residues 508 to 528; it reads IKTLLLPLILVITYLIFKKIV. The Nuclear segment spans residues 529–548; that stretch reads RDIMCVLYTNTYVRKQLLDN. The helical transmembrane segment at 549 to 569 threads the bilayer; sequence AELIFHTLQLLAFTGLAILIM. Residues 570–590 lie on the Perinuclear space side of the membrane; it reads RLKLFLTPHMCIMASLICSQR. The chain crosses the membrane as a helical span at residues 591 to 611; sequence LFGWLFCRIHFENVVFGILTM. Residues 612-773 are Nuclear-facing; the sequence is MSIQGCANLH…NSMYRVLKIN (162 aa).

Belongs to the dpy-19 family. In terms of assembly, interacts with FAM209. As to expression, predominantly expressed in testis. Present in testis but absent from epididymal sperm (at protein level).

It is found in the nucleus inner membrane. In terms of biological role, probable C-mannosyltransferase that mediates C-mannosylation of tryptophan residues on target proteins. Functionally, required during spermatogenesis for sperm head elongation and acrosome formation. Also plays a role in acrosome attachment to the nuclear envelope. This Mus musculus (Mouse) protein is Probable C-mannosyltransferase DPY19L2 (Dpy19l2).